A 606-amino-acid polypeptide reads, in one-letter code: MAPNNGSWLVLSISMMLLSHGMIIIAKDQAIHHHDDDHDDMLINDHQMINDDDPYRTAYHFQSPKNWMNDPNGPMIYKGIYHLFYQYYPYDPVWHTEIVWGHSTSTDLINWTQQPIALSPSEPYDINGCWSGSITILPQNKPVILYTGINNKNYQVQNLALPKNLSDPYLKEWIKLPQNPLMAGTPTNNNNINASSFRDPSTAWQLSDGKWRVIVGTQQGKRGLAVLFTSDDFVKWNNTGNPLHSTEGNGIWECPDFFPVYVGKSLGADTSIIGDDVKHVLKLSLFDTQYEYYTIGRYDIEKDIYVPDEGSIESDLGLRYDYGKFYASKSFFDDETNRRILWGWVNESSIQADDIKKGWSGVQAIPRTVVLDKSGKQLVQWPLAEVDMLRENDVELPSQVIKGGSLVEISQITASQADVEISFKIPESNYVEELDSTCTNPQILCSQKGASIKGRFGPFGLLTLASMGLEEYTAVFFRIFKGPNKYVVLMCSDQTRSSLNPTTDKLSFGIFVDVDPINEDLSLRILIDHSIVESFSAKGKSCITARVYPTMAINDKAKLYVFNNGTEDVKITKLSAWSMKKAQINLSTDNTSNMSYNSNKVEKEEF.

The first 21 residues, 1–21, serve as a signal peptide directing secretion; it reads MAPNNGSWLVLSISMMLLSHG. The N-linked (GlcNAc...) asparagine glycan is linked to Asn-5. Asp-70 is an active-site residue. N-linked (GlcNAc...) asparagine glycans are attached at residues Asn-110, Asn-164, Asn-193, Asn-237, and Asn-346. Residues Cys-445 and Cys-491 are joined by a disulfide bond. N-linked (GlcNAc...) asparagine glycosylation is found at Asn-564, Asn-585, Asn-590, and Asn-593.

Belongs to the glycosyl hydrolase 32 family.

The catalysed reaction is Hydrolysis of terminal, non-reducing (2-&gt;6)-linked beta-D-fructofuranose residues in fructans.. Its activity is regulated as follows. Not inhibited by sucrose. Functionally, hydrolyzes levan-type beta-(2-&gt;6)-linked fructans to fructose, but not inulin-type beta-(2-&gt;1)-linked fructans. The protein is Fructan 6-exohydrolase of Beta vulgaris (Sugar beet).